A 159-amino-acid polypeptide reads, in one-letter code: NADH-quinone oxidoreductase subunit I (159 aa).

4Fe-4S ferredoxin-type domains lie at R51–D80 and T90–N119. C60, C63, C66, C70, C99, C102, C105, and C109 together coordinate [4Fe-4S] cluster.

This sequence belongs to the complex I 23 kDa subunit family. In terms of assembly, NDH-1 is composed of 14 different subunits. Subunits NuoA, H, J, K, L, M, N constitute the membrane sector of the complex. It depends on [4Fe-4S] cluster as a cofactor.

The protein localises to the cell inner membrane. It catalyses the reaction a quinone + NADH + 5 H(+)(in) = a quinol + NAD(+) + 4 H(+)(out). In terms of biological role, NDH-1 shuttles electrons from NADH, via FMN and iron-sulfur (Fe-S) centers, to quinones in the respiratory chain. The immediate electron acceptor for the enzyme in this species is believed to be ubiquinone. Couples the redox reaction to proton translocation (for every two electrons transferred, four hydrogen ions are translocated across the cytoplasmic membrane), and thus conserves the redox energy in a proton gradient. The sequence is that of NADH-quinone oxidoreductase subunit I from Rickettsia massiliae (strain Mtu5).